The chain runs to 208 residues: Thymidylate kinase (208 aa).

Residue 10-17 (GPDGSGKT) coordinates ATP.

This sequence belongs to the thymidylate kinase family.

It catalyses the reaction dTMP + ATP = dTDP + ADP. Its function is as follows. Phosphorylation of dTMP to form dTDP in both de novo and salvage pathways of dTTP synthesis. The protein is Thymidylate kinase of Listeria welshimeri serovar 6b (strain ATCC 35897 / DSM 20650 / CCUG 15529 / CIP 8149 / NCTC 11857 / SLCC 5334 / V8).